The chain runs to 177 residues: Large ribosomal subunit protein uL6 (177 aa).

The protein belongs to the universal ribosomal protein uL6 family. As to quaternary structure, part of the 50S ribosomal subunit.

In terms of biological role, this protein binds to the 23S rRNA, and is important in its secondary structure. It is located near the subunit interface in the base of the L7/L12 stalk, and near the tRNA binding site of the peptidyltransferase center. The chain is Large ribosomal subunit protein uL6 from Pseudomonas entomophila (strain L48).